A 390-amino-acid polypeptide reads, in one-letter code: Nucleotide-sugar uncharacterized transporter 1 (390 aa).

10 helical membrane-spanning segments follow: residues 61 to 81 (ICGP…IIFM), 89 to 109 (IGFE…YLLM), 128 to 148 (SLLP…LANV), 155 to 175 (VGFY…AEFL), 182 to 201 (SFMK…VATV), 206 to 228 (FSLF…KILW), 249 to 269 (ITLL…ALSF), 278 to 298 (AILV…LALG), 306 to 326 (VVLG…IFGS), and 329 to 349 (GFIS…YTYL). A compositionally biased stretch (low complexity) spans 356–365 (LKTSSSSSAL). Residues 356-390 (LKTSSSSSALSEKKSRFSDLKDDDKNLEPYGSEAV) form a disordered region. The span at 366–382 (SEKKSRFSDLKDDDKNL) shows a compositional bias: basic and acidic residues.

Belongs to the TPT transporter family. TPT (TC 2.A.7.9) subfamily.

It localises to the membrane. The protein is Nucleotide-sugar uncharacterized transporter 1 of Arabidopsis thaliana (Mouse-ear cress).